We begin with the raw amino-acid sequence, 111 residues long: T cell receptor beta variable 29-1 (111 aa).

An N-terminal signal peptide occupies residues 1 to 16 (MLSLLLLLLGLGSVFS). In terms of domain architecture, Ig-like spans 17-111 (AVISQKPSRD…DSSIYLCSVE (95 aa)). Residues Cys-38 and Cys-108 are joined by a disulfide bond. Asn-87 is a glycosylation site (N-linked (GlcNAc...) asparagine).

As to quaternary structure, alpha-beta TR is a heterodimer composed of an alpha and beta chain; disulfide-linked. The alpha-beta TR is associated with the transmembrane signaling CD3 coreceptor proteins to form the TR-CD3 (TcR or TCR). The assembly of alpha-beta TR heterodimers with CD3 occurs in the endoplasmic reticulum where a single alpha-beta TR heterodimer associates with one CD3D-CD3E heterodimer, one CD3G-CD3E heterodimer and one CD247 homodimer forming a stable octameric structure. CD3D-CD3E and CD3G-CD3E heterodimers preferentially associate with TR alpha and TR beta chains, respectively. The association of the CD247 homodimer is the last step of TcR assembly in the endoplasmic reticulum and is required for transport to the cell surface.

The protein localises to the cell membrane. V region of the variable domain of T cell receptor (TR) beta chain that participates in the antigen recognition. Alpha-beta T cell receptors are antigen specific receptors which are essential to the immune response and are present on the cell surface of T lymphocytes. Recognize peptide-major histocompatibility (MH) (pMH) complexes that are displayed by antigen presenting cells (APC), a prerequisite for efficient T cell adaptive immunity against pathogens. Binding of alpha-beta TR to pMH complex initiates TR-CD3 clustering on the cell surface and intracellular activation of LCK that phosphorylates the ITAM motifs of CD3G, CD3D, CD3E and CD247 enabling the recruitment of ZAP70. In turn ZAP70 phosphorylates LAT, which recruits numerous signaling molecules to form the LAT signalosome. The LAT signalosome propagates signal branching to three major signaling pathways, the calcium, the mitogen-activated protein kinase (MAPK) kinase and the nuclear factor NF-kappa-B (NF-kB) pathways, leading to the mobilization of transcription factors that are critical for gene expression and essential for T cell growth and differentiation. The T cell repertoire is generated in the thymus, by V-(D)-J rearrangement. This repertoire is then shaped by intrathymic selection events to generate a peripheral T cell pool of self-MH restricted, non-autoaggressive T cells. Post-thymic interaction of alpha-beta TR with the pMH complexes shapes TR structural and functional avidity. The protein is T cell receptor beta variable 29-1 of Homo sapiens (Human).